The primary structure comprises 492 residues: Protein nucleotidyltransferase YdiU (492 aa).

8 residues coordinate ATP: glycine 88, glycine 90, arginine 91, lysine 111, aspartate 123, glycine 124, arginine 174, and arginine 181. The active-site Proton acceptor is the aspartate 250. Residues asparagine 251 and aspartate 260 each contribute to the Mg(2+) site. Aspartate 260 is an ATP binding site.

This sequence belongs to the SELO family. Requires Mg(2+) as cofactor. Mn(2+) is required as a cofactor.

It carries out the reaction L-seryl-[protein] + ATP = 3-O-(5'-adenylyl)-L-seryl-[protein] + diphosphate. It catalyses the reaction L-threonyl-[protein] + ATP = 3-O-(5'-adenylyl)-L-threonyl-[protein] + diphosphate. The catalysed reaction is L-tyrosyl-[protein] + ATP = O-(5'-adenylyl)-L-tyrosyl-[protein] + diphosphate. The enzyme catalyses L-histidyl-[protein] + UTP = N(tele)-(5'-uridylyl)-L-histidyl-[protein] + diphosphate. It carries out the reaction L-seryl-[protein] + UTP = O-(5'-uridylyl)-L-seryl-[protein] + diphosphate. It catalyses the reaction L-tyrosyl-[protein] + UTP = O-(5'-uridylyl)-L-tyrosyl-[protein] + diphosphate. Functionally, nucleotidyltransferase involved in the post-translational modification of proteins. It can catalyze the addition of adenosine monophosphate (AMP) or uridine monophosphate (UMP) to a protein, resulting in modifications known as AMPylation and UMPylation. The sequence is that of Protein nucleotidyltransferase YdiU from Rhodopseudomonas palustris (strain ATCC BAA-98 / CGA009).